The sequence spans 301 residues: Acetylglutamate kinase (301 aa).

Substrate is bound by residues 68 to 69 (GG), Arg90, and Asn195.

The protein belongs to the acetylglutamate kinase family. ArgB subfamily.

It is found in the cytoplasm. It catalyses the reaction N-acetyl-L-glutamate + ATP = N-acetyl-L-glutamyl 5-phosphate + ADP. Its pathway is amino-acid biosynthesis; L-arginine biosynthesis; N(2)-acetyl-L-ornithine from L-glutamate: step 2/4. Its function is as follows. Catalyzes the ATP-dependent phosphorylation of N-acetyl-L-glutamate. The polypeptide is Acetylglutamate kinase (Pseudomonas fluorescens (strain Pf0-1)).